The chain runs to 94 residues: Acylphosphatase (94 aa).

The Acylphosphatase-like domain maps to 6–92 (RVHVWIRGRV…EGLPTFEIRP (87 aa)). Catalysis depends on residues Arg21 and Asn39.

Belongs to the acylphosphatase family.

It catalyses the reaction an acyl phosphate + H2O = a carboxylate + phosphate + H(+). The sequence is that of Acylphosphatase (acyP) from Synechococcus sp. (strain JA-2-3B'a(2-13)) (Cyanobacteria bacterium Yellowstone B-Prime).